A 1463-amino-acid polypeptide reads, in one-letter code: Chitin binding domain (ChtBD2) containing chtb-1 (1463 aa).

The first 17 residues, 1–17, serve as a signal peptide directing secretion; sequence MLRNLILITLLVASGHG. The disordered stretch occupies residues 70 to 99; the sequence is SSVPSVPAENTQPQQHPKARKPASPNICEQ. In terms of domain architecture, Chitin-binding type-2 spans 94 to 164; it reads PNICEQDNGA…IVPKRMSSLS (71 aa). A disulfide bridge links C141 with C154. 2 disordered regions span residues 720–773 and 841–869; these read IDSD…DFPI and KNPK…FPDS. Positions 722–734 are enriched in polar residues; it reads SDTNSTTNPSQPE. Basic residues-rich tracts occupy residues 740 to 756 and 843 to 853; these read NNTK…KPKK and PKKRKTKRRKQ.

This Caenorhabditis elegans protein is Chitin binding domain (ChtBD2) containing chtb-1.